An 815-amino-acid chain; its full sequence is Lon protease 1 (815 aa).

In terms of domain architecture, Lon N-terminal spans 12–205 (VFVLALRDVV…HILKTIETEI (194 aa)). 358-365 (GPPGVGKT) is a binding site for ATP. One can recognise a Lon proteolytic domain in the interval 594–775 (TNQIGQVAGL…DEVFKIALES (182 aa)). Active-site residues include Ser-681 and Lys-724.

It belongs to the peptidase S16 family. As to quaternary structure, homohexamer. Organized in a ring with a central cavity.

The protein localises to the cytoplasm. It carries out the reaction Hydrolysis of proteins in presence of ATP.. In terms of biological role, ATP-dependent serine protease that mediates the selective degradation of mutant and abnormal proteins as well as certain short-lived regulatory proteins. Required for cellular homeostasis and for survival from DNA damage and developmental changes induced by stress. Degrades polypeptides processively to yield small peptide fragments that are 5 to 10 amino acids long. Binds to DNA in a double-stranded, site-specific manner. This Hydrogenovibrio crunogenus (strain DSM 25203 / XCL-2) (Thiomicrospira crunogena) protein is Lon protease 1.